The following is a 91-amino-acid chain: Probable Fe(2+)-trafficking protein (91 aa).

Belongs to the Fe(2+)-trafficking protein family.

In terms of biological role, could be a mediator in iron transactions between iron acquisition and iron-requiring processes, such as synthesis and/or repair of Fe-S clusters in biosynthetic enzymes. In Histophilus somni (strain 129Pt) (Haemophilus somnus), this protein is Probable Fe(2+)-trafficking protein.